A 601-amino-acid polypeptide reads, in one-letter code: Elongation factor 4 (601 aa).

Residues Glu7 to Lys189 form the tr-type G domain. Residues Asp19–Thr24 and Asn136–Asp139 each bind GTP.

This sequence belongs to the TRAFAC class translation factor GTPase superfamily. Classic translation factor GTPase family. LepA subfamily.

It localises to the cell inner membrane. It catalyses the reaction GTP + H2O = GDP + phosphate + H(+). Its function is as follows. Required for accurate and efficient protein synthesis under certain stress conditions. May act as a fidelity factor of the translation reaction, by catalyzing a one-codon backward translocation of tRNAs on improperly translocated ribosomes. Back-translocation proceeds from a post-translocation (POST) complex to a pre-translocation (PRE) complex, thus giving elongation factor G a second chance to translocate the tRNAs correctly. Binds to ribosomes in a GTP-dependent manner. In Acidiphilium cryptum (strain JF-5), this protein is Elongation factor 4.